We begin with the raw amino-acid sequence, 983 residues long: Ephrin type-A receptor 3 (983 aa).

Positions 1–19 (MDRRRLPLLLLCAALGSAG) are cleaved as a signal peptide. Over 20-540 (RLSARPGNEV…SFSISSENSQ (521 aa)) the chain is Extracellular. Residues 28 to 206 (EVNLLDSKTI…YFKKCPFTVK (179 aa)) form the Eph LBD domain. Residues asparagine 231, asparagine 336, asparagine 390, asparagine 403, and asparagine 492 are each glycosylated (N-linked (GlcNAc...) asparagine). Fibronectin type-III domains follow at residues 324–434 (PPSA…TNQA) and 435–530 (APSP…TSPD). A helical membrane pass occupies residues 541–564 (VVMIAISAAVAIILLTVVVYVLIG). Over 565-983 (RFCGYKKSKH…THTKNSPVPV (419 aa)) the chain is Cytoplasmic. Residues tyrosine 596 and tyrosine 602 each carry the phosphotyrosine; by autocatalysis modification. The Protein kinase domain occupies 621 to 882 (ISIDKVVGAG…QIVSILDKLI (262 aa)). Residues 628–633 (GAGEFG), lysine 653, and 700–706 (EYMENGS) contribute to the ATP site. Phosphotyrosine; by autocatalysis is present on tyrosine 701. The Proton acceptor role is filled by aspartate 746. Position 750–751 (750–751 (RN)) interacts with ATP. Phosphotyrosine; by autocatalysis is present on tyrosine 779. Residues 911-975 (SAFRTAGDWL…VSSIKTLETH (65 aa)) enclose the SAM domain. The PDZ-binding signature appears at 981-983 (VPV).

This sequence belongs to the protein kinase superfamily. Tyr protein kinase family. Ephrin receptor subfamily. In terms of assembly, heterotetramer upon binding of the ligand. The heterotetramer is composed of an ephrin dimer and a receptor dimer. Oligomerization is probably required to induce biological responses. Post-translationally, autophosphorylates upon activation by EFNA5. Highly expressed in the developing brain and embryonic tissues. In adult, the greatest levels of expression occur in the brain. It is expressed in a graded manner across the retina with the highest expression at its temporal pole. Detectable in all other adult tissues examined, except the liver.

Its subcellular location is the cell membrane. It catalyses the reaction L-tyrosyl-[protein] + ATP = O-phospho-L-tyrosyl-[protein] + ADP + H(+). In terms of biological role, receptor tyrosine kinase which binds promiscuously membrane-bound ephrin family ligands residing on adjacent cells, leading to contact-dependent bidirectional signaling into neighboring cells. The signaling pathway downstream of the receptor is referred to as forward signaling while the signaling pathway downstream of the ephrin ligand is referred to as reverse signaling. Highly promiscuous for ephrin-A ligands it binds preferentially EFNA5. Upon activation by EFNA5 regulates cell-cell adhesion, cytoskeletal organization and cell migration. Plays a role in cardiac cells migration and differentiation probably through activation by EFNA1. Involved in the retinotectal mapping of neurons. May also control the segregation but not the guidance of motor and sensory axons during neuromuscular circuit development. This is Ephrin type-A receptor 3 (EPHA3) from Gallus gallus (Chicken).